A 514-amino-acid polypeptide reads, in one-letter code: Putative ribose/galactose/methyl galactoside import ATP-binding protein 3 (514 aa).

2 ABC transporter domains span residues L21–T256 and V267–S512. G53 to S60 is an ATP binding site.

The protein belongs to the ABC transporter superfamily. Carbohydrate importer 2 (CUT2) (TC 3.A.1.2) family.

It localises to the cell inner membrane. It catalyses the reaction D-ribose(out) + ATP + H2O = D-ribose(in) + ADP + phosphate + H(+). It carries out the reaction D-galactose(out) + ATP + H2O = D-galactose(in) + ADP + phosphate + H(+). Functionally, part of an ABC transporter complex involved in carbohydrate import. Could be involved in ribose, galactose and/or methyl galactoside import. Responsible for energy coupling to the transport system. The chain is Putative ribose/galactose/methyl galactoside import ATP-binding protein 3 from Burkholderia cenocepacia (strain HI2424).